A 275-amino-acid polypeptide reads, in one-letter code: Hydroxyethylthiazole kinase (275 aa).

Met-50 lines the substrate pocket. Arg-126 and Ser-171 together coordinate ATP. Position 200 (Ala-200) interacts with substrate.

It belongs to the Thz kinase family. Mg(2+) serves as cofactor.

It carries out the reaction 5-(2-hydroxyethyl)-4-methylthiazole + ATP = 4-methyl-5-(2-phosphooxyethyl)-thiazole + ADP + H(+). The protein operates within cofactor biosynthesis; thiamine diphosphate biosynthesis; 4-methyl-5-(2-phosphoethyl)-thiazole from 5-(2-hydroxyethyl)-4-methylthiazole: step 1/1. Catalyzes the phosphorylation of the hydroxyl group of 4-methyl-5-beta-hydroxyethylthiazole (THZ). In Acinetobacter baumannii (strain ACICU), this protein is Hydroxyethylthiazole kinase.